We begin with the raw amino-acid sequence, 106 residues long: Large ribosomal subunit protein uL24 (106 aa).

The protein belongs to the universal ribosomal protein uL24 family. As to quaternary structure, part of the 50S ribosomal subunit.

In terms of biological role, one of two assembly initiator proteins, it binds directly to the 5'-end of the 23S rRNA, where it nucleates assembly of the 50S subunit. Its function is as follows. One of the proteins that surrounds the polypeptide exit tunnel on the outside of the subunit. The polypeptide is Large ribosomal subunit protein uL24 (Polaromonas sp. (strain JS666 / ATCC BAA-500)).